A 323-amino-acid chain; its full sequence is Viral cathepsin (323 aa).

An N-terminal signal peptide occupies residues 1–16 (MNKILFYLFVYGVVNS). Residues 17-112 (AAYDLLKAPN…IVLDQPPGKG (96 aa)) constitute a propeptide, activation peptide. 3 disulfides stabilise this stretch: C133/C174, C167/C207, and C262/C310. C136 is a catalytic residue. An N-linked (GlcNAc...) asparagine; by host glycan is attached at N158. Residues H269 and N289 contribute to the active site.

The protein belongs to the peptidase C1 family. Interacts with chitinase/CHIA; this interaction maintains VCATH in the host endoplasmic reticulum. Post-translationally, synthesized as an inactive proenzyme and activated by proteolytic removal of the inhibitory propeptide.

The protein localises to the host endoplasmic reticulum. It catalyses the reaction Endopeptidase of broad specificity, hydrolyzing substrates of both cathepsin L and cathepsin B.. In terms of biological role, cysteine protease that plays an essential role in host liquefaction to facilitate horizontal transmission of the virus. Accumulates within infected cells as an inactive proenzyme (proV-CATH), which is activated by proteolytic cleavage upon cell death. The chain is Viral cathepsin (VCATH) from Lepidoptera (butterflies and moths).